Reading from the N-terminus, the 327-residue chain is Phenylalanine--tRNA ligase alpha subunit (327 aa).

Mg(2+) is bound at residue Glu252.

The protein belongs to the class-II aminoacyl-tRNA synthetase family. Phe-tRNA synthetase alpha subunit type 1 subfamily. As to quaternary structure, tetramer of two alpha and two beta subunits. It depends on Mg(2+) as a cofactor.

It localises to the cytoplasm. The enzyme catalyses tRNA(Phe) + L-phenylalanine + ATP = L-phenylalanyl-tRNA(Phe) + AMP + diphosphate + H(+). The chain is Phenylalanine--tRNA ligase alpha subunit from Tolumonas auensis (strain DSM 9187 / NBRC 110442 / TA 4).